We begin with the raw amino-acid sequence, 261 residues long: Kallikrein 1-related peptidase b3 (261 aa).

The signal sequence occupies residues 1–18 (MWFLILFLALSLGGIDAA). Residues 19–24 (PPVQSR) constitute a propeptide, activation peptide. Residues 25-107 (IVGGFKCEKN…HPGFNMSLMR (83 aa)) form a segment B1 region. In terms of domain architecture, Peptidase S1 spans 25-258 (IVGGFKCEKN…FTSWIKDTMA (234 aa)). Cystine bridges form between Cys-31/Cys-173, Cys-50/Cys-66, Cys-152/Cys-219, Cys-184/Cys-198, and Cys-209/Cys-234. The Charge relay system role is filled by His-65. An N-linked (GlcNAc...) asparagine glycan is attached at Asn-102. Residues 112-164 (FLEYDYSNDLMLLRLSKPADITDTVKPITLPTEEPKLGSTCLASGWGSITPTK) form a segment C region. The tract at residues 112-261 (FLEYDYSNDL…WIKDTMAKNP (150 aa)) is segment A. The Charge relay system role is filled by Asp-120. The tract at residues 165–261 (FQFTDDLYCV…WIKDTMAKNP (97 aa)) is segment B2. The active-site Charge relay system is Ser-213. Residues His-231 and Glu-236 each contribute to the Zn(2+) site.

It belongs to the peptidase S1 family. Kallikrein subfamily. As to quaternary structure, 7S nerve growth factor is composed of two alpha chains, a beta dimer composed of identical chains, and two gamma chains. The cofactor is Zn(2+).

It carries out the reaction Preferential cleavage of Arg-|-Xaa bonds in small molecule substrates. Highly selective action to release kallidin (lysyl-bradykinin) from kininogen involves hydrolysis of Met-|-Xaa or Leu-|-Xaa.. Its function is as follows. 7S NGF alpha chain stabilizes the 7S complex. The beta dimer promotes neurite growth. The gamma chain is an arginine-specific protease; it may also have plasminogen activator activity, as well as mitogenic activity for chick embryo fibroblasts. This is Kallikrein 1-related peptidase b3 (Klk1b3) from Mus musculus (Mouse).